The chain runs to 157 residues: Probable succinate transporter subunit YjjB (157 aa).

4 helical membrane-spanning segments follow: residues Leu8 to Phe28, Met50 to Val70, Val87 to Ile107, and Phe129 to Trp149.

It belongs to the ThrE exporter (TC 2.A.79) family. The transporter is composed of YjjB and YjjP.

It is found in the cell inner membrane. Its function is as follows. Involved in succinate export with YjjP. Both proteins are required for export. The sequence is that of Probable succinate transporter subunit YjjB from Escherichia coli O1:K1 / APEC.